We begin with the raw amino-acid sequence, 1030 residues long: Eukaryotic translation initiation factor 3 subunit A (1030 aa).

The stretch at 94 to 126 (FKEIITPIEQKVDELKEKIEKENQENPLVEQNE) forms a coiled coil. The 176-residue stretch at 308–483 (SQLYSSVLLV…GVIRFGHYDF (176 aa)) folds into the PCI domain. Coiled-coil stretches lie at residues 527–620 (INSL…KAKI) and 720–772 (IQQE…RKNA). Basic and acidic residues-rich tracts occupy residues 576-591 (RDQQ…REKE), 743-771 (EKAR…ERKN), 800-931 (RGGD…RRDG), 939-985 (GRRD…RRDG), and 1003-1019 (DSWR…KDAD). Disordered regions lie at residues 576–603 (RDQQ…NQLD) and 737–1030 (RIAA…KKRY).

This sequence belongs to the eIF-3 subunit A family. In terms of assembly, component of the eukaryotic translation initiation factor 3 (eIF-3) complex.

The protein localises to the cytoplasm. Functionally, RNA-binding component of the eukaryotic translation initiation factor 3 (eIF-3) complex, which is involved in protein synthesis of a specialized repertoire of mRNAs and, together with other initiation factors, stimulates binding of mRNA and methionyl-tRNAi to the 40S ribosome. The eIF-3 complex specifically targets and initiates translation of a subset of mRNAs involved in cell proliferation. The polypeptide is Eukaryotic translation initiation factor 3 subunit A (eif3A) (Dictyostelium discoideum (Social amoeba)).